The chain runs to 548 residues: Eukaryotic translation initiation factor 3 subunit D (548 aa).

The residue at position 53 (Lys-53) is an N6-acetyllysine. Ser-161 carries the phosphoserine modification. Positions Asp-285–Pro-299 are RNA gate. The tract at residues Pro-523 to Ala-548 is disordered. 2 positions are modified to phosphoserine: Ser-528 and Ser-529. Over residues Ser-529–Ala-548 the composition is skewed to acidic residues.

Belongs to the eIF-3 subunit D family. As to quaternary structure, component of the eukaryotic translation initiation factor 3 (eIF-3) complex, which is composed of 13 subunits: EIF3A, EIF3B, EIF3C, EIF3D, EIF3E, EIF3F, EIF3G, EIF3H, EIF3I, EIF3J, EIF3K, EIF3L and EIF3M. The eIF-3 complex appears to include 3 stable modules: module A is composed of EIF3A, EIF3B, EIF3G and EIF3I; module B is composed of EIF3F, EIF3H, and EIF3M; and module C is composed of EIF3C, EIF3D, EIF3E, EIF3K and EIF3L. EIF3C of module C binds EIF3B of module A and EIF3H of module B, thereby linking the three modules. EIF3J is a labile subunit that binds to the eIF-3 complex via EIF3B. The eIF-3 complex interacts with RPS6KB1 under conditions of nutrient depletion. Mitogenic stimulation leads to binding and activation of a complex composed of MTOR and RPTOR, leading to phosphorylation and release of RPS6KB1 and binding of EIF4B to eIF-3.

It is found in the cytoplasm. Functionally, mRNA cap-binding component of the eukaryotic translation initiation factor 3 (eIF-3) complex, a complex required for several steps in the initiation of protein synthesis of a specialized repertoire of mRNAs. The eIF-3 complex associates with the 40S ribosome and facilitates the recruitment of eIF-1, eIF-1A, eIF-2:GTP:methionyl-tRNAi and eIF-5 to form the 43S pre-initiation complex (43S PIC). The eIF-3 complex stimulates mRNA recruitment to the 43S PIC and scanning of the mRNA for AUG recognition. The eIF-3 complex is also required for disassembly and recycling of post-termination ribosomal complexes and subsequently prevents premature joining of the 40S and 60S ribosomal subunits prior to initiation. The eIF-3 complex specifically targets and initiates translation of a subset of mRNAs involved in cell proliferation, including cell cycling, differentiation and apoptosis, and uses different modes of RNA stem-loop binding to exert either translational activation or repression. In the eIF-3 complex, EIF3D specifically recognizes and binds the 7-methylguanosine cap of a subset of mRNAs. This is Eukaryotic translation initiation factor 3 subunit D from Bos taurus (Bovine).